The chain runs to 212 residues: Ribosome maturation factor RimP (212 aa).

The protein belongs to the RimP family.

It localises to the cytoplasm. In terms of biological role, required for maturation of 30S ribosomal subunits. This is Ribosome maturation factor RimP from Variovorax paradoxus (strain S110).